Reading from the N-terminus, the 284-residue chain is Nucleotide-binding protein Sden_0486 (284 aa).

Position 8-15 (8-15 (GRSGSGKS)) interacts with ATP. Position 56 to 59 (56 to 59 (DVRN)) interacts with GTP.

Belongs to the RapZ-like family.

Functionally, displays ATPase and GTPase activities. The protein is Nucleotide-binding protein Sden_0486 of Shewanella denitrificans (strain OS217 / ATCC BAA-1090 / DSM 15013).